A 76-amino-acid polypeptide reads, in one-letter code: Small ribosomal subunit protein bS18 (76 aa).

This sequence belongs to the bacterial ribosomal protein bS18 family. As to quaternary structure, part of the 30S ribosomal subunit. Forms a tight heterodimer with protein bS6.

Binds as a heterodimer with protein bS6 to the central domain of the 16S rRNA, where it helps stabilize the platform of the 30S subunit. The polypeptide is Small ribosomal subunit protein bS18 (Stutzerimonas stutzeri (strain A1501) (Pseudomonas stutzeri)).